The primary structure comprises 264 residues: MDQNKSTQATGNGKKTEEINELLESFIKEGPKLLWGSTNLKYEDQISRSSEHELQQYRELFTRLKFSYIEQGTKERYLRAILDDPPMLVEAEDNEKLETTNSSLKGRLKSEKREVDLLTEELKTTSRELSSNYESVMEECKNTKSTLSKLESLESELLKLQQDSSTKTPILPEVEAAIHDLESELNITNESIETIDGKIDNDEKYFIQLTKNLSLLEKEYKIASERSNQIKAAIHTRTPDADAKKQVQNWYTSMLEIYDQLLQK.

A coiled-coil region spans residues 90 to 236 (EAEDNEKLET…SNQIKAAIHT (147 aa)).

The protein belongs to the KRE28 family. As to quaternary structure, component of the KNL1/SPC105 complex composed of at least spc7 and sos7. Part of the outer kinetochore KMN network that includes the KNL1, MIS12 and NDC80 complexes. Interacts (via C-terminus) with spc7 (via C-terminus); the interaction is direct.

The protein resides in the nucleus. Its subcellular location is the chromosome. It localises to the centromere. It is found in the kinetochore. Acts as a component of the outer kinetochore KNL1 complex that facilitates microtubule-kinetochore interactions and the spindle assembly checkpoint. Kinetochores, consisting of a centromere-associated inner segment and a microtubule-contacting outer segment, play a crucial role in chromosome segregation by mediating the physical connection between centromeric DNA and spindle microtubules. The outer kinetochore is made up of the ten-subunit KMN network, comprising the MIS12, NDC80 and KNL1 complexes, and auxiliary microtubule-associated components; together they connect the outer kinetochore with the inner kinetochore, bind microtubules, and mediate interactions with mitotic checkpoint proteins that delay anaphase until chromosomes are bioriented on the spindle. This Schizosaccharomyces pombe (strain 972 / ATCC 24843) (Fission yeast) protein is Outer kinetochore KNL1 complex subunit sos7 (sos7).